Reading from the N-terminus, the 80-residue chain is Moroidotoxin A (80 aa).

Residues 1–27 form the signal peptide; sequence MAAVKKHLRFALVAAITIALLVAGSVA. A propeptide spanning residues 28-44 is cleaved from the precursor; that stretch reads DESSEDIDNIVIKTPLD. 3 disulfide bridges follow: Cys48/Cys65, Cys53/Cys67, and Cys61/Cys76.

Belongs to the gympietide family. Expressed in trichomes, that are stiff epidermal hairs located on the surface of petioles and leaves. Not expressed in other aerial parts.

It is found in the secreted. Its function is as follows. Neurotoxin certainly responsible for the defensive, persistent, and painful stings of the giant stinging tree. Inhibits inactivation of Nav1.7/SCN9A sodium channel in sensory neurons by directly interacting with TMEM233, a newly described Nav-interacting protein. Has virtually no effect on Nav1.7/SCN9A function in heterologous expression systems and in neurons that do not express TMEM233. Also weakly but significantly affects Nav1.8/SCN10A. Coexpression of TMEM233 with Nav also confers ExTxA sensitivity to Nav1.1-Nav1.6. On the Nav1.7/SCN9A channel, causes a significant hyperpolarizing shift in the voltage dependence of activation. Its effects on Nav currents are irreversible, with no apparent reduction in activity even after repeated wash steps over 30 minutes. In vivo, induces nocifensive behavior in mice (licking or biting and shaking or lifting of the affected paw) lasting for approximately 1 hour. The chain is Moroidotoxin A from Dendrocnide moroides (Gympie stinging tree).